The primary structure comprises 54 residues: U-reduvitoxin-Pr1a (54 aa).

A signal peptide spans 1–19 (MKLLGLLLLVFTFMALAFA). Cystine bridges form between C24–C39, C31–C44, and C38–C51.

This sequence belongs to the venom Ptu1-like knottin family. In terms of tissue distribution, expressed by the venom gland (posterior main gland) (at protein level).

It is found in the secreted. Its function is as follows. Binds reversibly and blocks P/Q-type voltage-gated calcium channels (Cav). This is U-reduvitoxin-Pr1a from Platymeris rhadamanthus (Red spot assassin bug).